We begin with the raw amino-acid sequence, 245 residues long: Peroxisome biogenesis protein 19-2 (245 aa).

Positions 17–106 (ALDDFKDLNL…LSSKQQPTGS (90 aa)) are disordered. 2 stretches are compositionally biased toward basic and acidic residues: residues 33–44 (VKKEEGDKKETE) and 71–92 (AKEDHVTEALDKLREQTRETVK). A compositionally biased stretch (polar residues) spans 96 to 105 (SLSSKQQPTG). The residue at position 242 (Cys-242) is a Cysteine methyl ester. Cys-242 carries the S-farnesyl cysteine lipid modification. Positions 243–245 (CVM) are cleaved as a propeptide — removed in mature form.

This sequence belongs to the peroxin-19 family. Dimer. Interacts with PEX10 (via C-terminus). In terms of processing, may be farnesylated. Expressed in roots, leaves, flowers, siliques and stems. Highest expression in roots and leaves.

Its subcellular location is the cytoplasm. The protein localises to the peroxisome membrane. In terms of biological role, contributes to morphology determination of peroxisomes, but not to import of peroxisomal matrix proteins. Required for proper post-translational import and stabilization of peroxisomal membrane proteins (PMPs). Acts as a cytosolic import receptor for PMPs and delivers them to the docking factor PEX3 at the peroxisomal membrane for subsequent insertion into the membrane. Acts as a chaperone in stabilizing or maintaining PMPs in the lipid bilayer. This is Peroxisome biogenesis protein 19-2 (PEX19-2) from Arabidopsis thaliana (Mouse-ear cress).